The primary structure comprises 1820 residues: Kinesin-like protein KIF20B (1820 aa).

The Kinesin motor domain occupies 58–479; the sequence is YLQVCLRIRP…LKFSAIAQKV (422 aa). 152-159 is an ATP binding site; that stretch reads GLTNSGKT. Serine 488 is subject to Phosphoserine. 2 coiled-coil regions span residues 523–603 and 674–793; these read ENSL…KIRE and GFED…MENT. Residue threonine 560 is modified to Phosphothreonine. Residues 829–866 form a disordered region; it reads SERKRVNENELQQDEPPAKKGSIHVSSAITEDQKKSEE. Serine 997 carries the post-translational modification Phosphoserine. The tract at residues 1050–1107 is necessary and sufficient for interaction with SHTN1; that stretch reads ENSFHSSIEAIWEECKEIVKASSKKSHQIEELEQQIEKLQAEVKGYKDENNRLKEKEH. Basic and acidic residues predominate over residues 1247-1264; the sequence is EEEEETNRQETEKLKEEL. Residues 1247–1275 are disordered; the sequence is EEEEETNRQETEKLKEELSASSARTQNLK. Residues 1265 to 1274 are compositionally biased toward polar residues; the sequence is SASSARTQNL. The segment at 1560 to 1820 is interaction with PIN1; sequence IETQIMDIKP…KRRLRTKTAK (261 aa). Serine 1588 carries the post-translational modification Phosphoserine. The residue at position 1644 (threonine 1644) is a Phosphothreonine; by CDK1. 3 positions are modified to phosphoserine: serine 1658, serine 1715, and serine 1740. The segment covering 1760 to 1772 has biased composition (polar residues); sequence LSNVEASKENVSQ. Residues 1760–1781 are disordered; that stretch reads LSNVEASKENVSQPKRAKRKLY.

Belongs to the TRAFAC class myosin-kinesin ATPase superfamily. Kinesin family. As to quaternary structure, oligomerizes (via kinesin motor domain). Associates with microtubules. Interacts (via C-terminal globular tail region) with PIN1 (via WW domain). Interacts with PRC1. Interacts with SHTN1 (via N-terminus); the interaction is direct and promotes the association of SHTN1 to microtubules in primary neurons. Post-translationally, phosphorylated during mitosis by CDK1. In terms of tissue distribution, brain, ovary, kidney and testis (at protein level). Overexpressed in bladder cancer cells (at protein level). Expressed in testis. Overexpressed in bladder cancer cells.

It is found in the nucleus. The protein resides in the cytoplasm. The protein localises to the cytoskeleton. Its subcellular location is the microtubule organizing center. It localises to the centrosome. It is found in the nucleolus. The protein resides in the nucleoplasm. The protein localises to the spindle. Its subcellular location is the spindle pole. It localises to the midbody. It is found in the cell projection. The protein resides in the axon. The protein localises to the growth cone. Plus-end-directed motor enzyme that is required for completion of cytokinesis. Required for proper midbody organization and abscission in polarized cortical stem cells. Plays a role in the regulation of neuronal polarization by mediating the transport of specific cargos. Participates in the mobilization of SHTN1 and in the accumulation of PIP3 in the growth cone of primary hippocampal neurons in a tubulin and actin-dependent manner. In the developing telencephalon, cooperates with SHTN1 to promote both the transition from the multipolar to the bipolar stage and the radial migration of cortical neurons from the ventricular zone toward the superficial layer of the neocortex. Involved in cerebral cortex growth. Acts as an oncogene for promoting bladder cancer cells proliferation, apoptosis inhibition and carcinogenic progression. This chain is Kinesin-like protein KIF20B, found in Homo sapiens (Human).